The sequence spans 865 residues: Leucine--tRNA ligase (865 aa).

The 'HIGH' region signature appears at 48–58 (PYPSGQLHVGH). The short motif at 626-630 (KMSKS) is the 'KMSKS' region element. Residue lysine 629 participates in ATP binding.

This sequence belongs to the class-I aminoacyl-tRNA synthetase family.

The protein resides in the cytoplasm. It carries out the reaction tRNA(Leu) + L-leucine + ATP = L-leucyl-tRNA(Leu) + AMP + diphosphate. The sequence is that of Leucine--tRNA ligase from Gluconobacter oxydans (strain 621H) (Gluconobacter suboxydans).